A 380-amino-acid chain; its full sequence is RNA-binding motif protein, Y chromosome (380 aa).

The 79-residue stretch at 8 to 86 folds into the RRM domain; sequence GKIFIGGLNI…KRIKVKQARR (79 aa). Disordered regions lie at residues 82-226 and 279-358; these read KQAR…STSR and HEAP…YSAS. The segment covering 166–178 has biased composition (polar residues); sequence RSATSAQTRSNTG. Basic and acidic residues-rich tracts occupy residues 180–190 and 333–351; these read RGREPHRREIS and IDREYFDREGRQERGHSPK.

As to quaternary structure, interacts with SRSF3/SRP20, SRSF9/SRP30, SRSF5/SRP40, and SRSF6/SRP55; this interaction inhibits SRSF family member pre-mRNA splicing. Interacts with splicing factor proteins and KHDRBS3. As to expression, testis-specific.

It is found in the nucleus. RNA-binding protein involved in pre-mRNA splicing. Required for sperm development. Acts additively with TRA2B to promote exon 7 inclusion of the survival motor neuron SMN. Binds non-specifically to mRNAs. In Mus musculus (Mouse), this protein is RNA-binding motif protein, Y chromosome.